We begin with the raw amino-acid sequence, 474 residues long: Probable diacyglycerol O-acyltransferase Tgs4 (474 aa).

H135 acts as the Proton acceptor in catalysis.

It belongs to the long-chain O-acyltransferase family.

The enzyme catalyses an acyl-CoA + a 1,2-diacyl-sn-glycerol = a triacyl-sn-glycerol + CoA. It participates in glycerolipid metabolism; triacylglycerol biosynthesis. Functionally, required for maintaining the appropriate mycolic acid composition and permeability of the envelope on its exposure to acidic pH. This chain is Probable diacyglycerol O-acyltransferase Tgs4 (tgs4), found in Mycobacterium tuberculosis (strain CDC 1551 / Oshkosh).